The following is a 253-amino-acid chain: Transmembrane protein 51 (253 aa).

A run of 2 helical transmembrane segments spans residues 17-37 and 65-85; these read IGLG…VPGF and VAYV…CLSI. Disordered regions lie at residues 93–133 and 164–253; these read QGED…YVPS and LTGL…RPPD. Residues 113–124 are compositionally biased toward acidic residues; sequence EDSQEEEEEDEE. Position 115 is a phosphoserine (serine 115). Residues 164-176 are compositionally biased toward polar residues; it reads LTGLDETTPTSTR. Serine 182 and serine 192 each carry phosphoserine. The segment covering 194 to 205 has biased composition (basic residues); that stretch reads LAKRLKPLKVRR. Residues 206 to 217 show a composition bias toward basic and acidic residues; that stretch reads IKSEKLHLKDFR. A compositionally biased stretch (pro residues) spans 224–238; that stretch reads NVPPPSIEPLTPPPQ. The span at 242–253 shows a compositional bias: basic and acidic residues; it reads VQEKAPDTRPPD.

The protein localises to the membrane. The chain is Transmembrane protein 51 (TMEM51) from Homo sapiens (Human).